The primary structure comprises 497 residues: ATP synthase subunit alpha, chloroplastic (497 aa).

An ATP-binding site is contributed by 170–177 (GDRQTGKT).

Belongs to the ATPase alpha/beta chains family. As to quaternary structure, F-type ATPases have 2 components, CF(1) - the catalytic core - and CF(0) - the membrane proton channel. CF(1) has five subunits: alpha(3), beta(3), gamma(1), delta(1), epsilon(1). CF(0) has four main subunits: a, b, b' and c.

It is found in the plastid. It localises to the chloroplast thylakoid membrane. The enzyme catalyses ATP + H2O + 4 H(+)(in) = ADP + phosphate + 5 H(+)(out). Produces ATP from ADP in the presence of a proton gradient across the membrane. The alpha chain is a regulatory subunit. This Bigelowiella natans (Pedinomonas minutissima) protein is ATP synthase subunit alpha, chloroplastic.